The primary structure comprises 147 residues: Large ribosomal subunit protein bL9 (147 aa).

Belongs to the bacterial ribosomal protein bL9 family.

Its function is as follows. Binds to the 23S rRNA. This chain is Large ribosomal subunit protein bL9, found in Campylobacter fetus subsp. fetus (strain 82-40).